A 612-amino-acid polypeptide reads, in one-letter code: Chaperone protein DnaK (612 aa).

At threonine 174 the chain carries Phosphothreonine; by autocatalysis. The interval 578-612 (GGQTGGATNTDSAGQGTTQDNVYEANYKVEDDDNK) is disordered. Residues 586-598 (NTDSAGQGTTQDN) are compositionally biased toward polar residues.

The protein belongs to the heat shock protein 70 family.

In terms of biological role, acts as a chaperone. The chain is Chaperone protein DnaK from Thermoanaerobacter sp. (strain X514).